The primary structure comprises 273 residues: Ribosomal RNA small subunit methyltransferase A (273 aa).

Residues N18, L20, G45, E66, D91, and N113 each contribute to the S-adenosyl-L-methionine site.

The protein belongs to the class I-like SAM-binding methyltransferase superfamily. rRNA adenine N(6)-methyltransferase family. RsmA subfamily.

Its subcellular location is the cytoplasm. It carries out the reaction adenosine(1518)/adenosine(1519) in 16S rRNA + 4 S-adenosyl-L-methionine = N(6)-dimethyladenosine(1518)/N(6)-dimethyladenosine(1519) in 16S rRNA + 4 S-adenosyl-L-homocysteine + 4 H(+). Its function is as follows. Specifically dimethylates two adjacent adenosines (A1518 and A1519) in the loop of a conserved hairpin near the 3'-end of 16S rRNA in the 30S particle. May play a critical role in biogenesis of 30S subunits. In Shigella dysenteriae serotype 1 (strain Sd197), this protein is Ribosomal RNA small subunit methyltransferase A.